We begin with the raw amino-acid sequence, 238 residues long: Outer membrane protein A (238 aa).

Beta stranded transmembrane passes span Leu-1–Pro-8, Leu-13–Gly-21, Pro-43–Ala-52, Ile-57–Gln-64, and Leu-83–Arg-91. Repeat copies occupy residues Ala-104–Pro-105, Ala-106–Pro-107, and Ala-108–Pro-109. Residues Ala-104–Pro-109 form a 3 X 2 AA tandem repeats of A-P region. In terms of domain architecture, OmpA-like spans Val-111–Ile-238. Cys-212 and Cys-224 form a disulfide bridge.

The protein belongs to the outer membrane OOP (TC 1.B.6) superfamily. OmpA family. In terms of assembly, monomer and homodimer.

It localises to the cell outer membrane. Its function is as follows. With TolR probably plays a role in maintaining the position of the peptidoglycan cell wall in the periplasm. Acts as a porin with low permeability that allows slow penetration of small solutes; an internal gate slows down solute passage. In Citrobacter freundii, this protein is Outer membrane protein A.